A 193-amino-acid chain; its full sequence is 7-methyl-GTP pyrophosphatase (193 aa).

The active-site Proton acceptor is the aspartate 69.

This sequence belongs to the Maf family. YceF subfamily. A divalent metal cation serves as cofactor.

The protein resides in the cytoplasm. It carries out the reaction N(7)-methyl-GTP + H2O = N(7)-methyl-GMP + diphosphate + H(+). Functionally, nucleoside triphosphate pyrophosphatase that hydrolyzes 7-methyl-GTP (m(7)GTP). May have a dual role in cell division arrest and in preventing the incorporation of modified nucleotides into cellular nucleic acids. This Chromohalobacter salexigens (strain ATCC BAA-138 / DSM 3043 / CIP 106854 / NCIMB 13768 / 1H11) protein is 7-methyl-GTP pyrophosphatase.